We begin with the raw amino-acid sequence, 325 residues long: MFANLKYVSLGILVFQTTSLVLTMRYSRTLKEEGPRYLSSTAVVVAELLKIMACILLVYKDSKCSLRALNRVLHDEILNKPMETLKLAIPSGIYTLQNNLLYVALSNLDAATYQVTYQLKILTTALFSVSMLSKKLGVYQWLSLVILMTGVAFVQWPSDSQLDSKELSAGSQFVGLMAVLTACFSSGFAGVYFEKILKETKQSVWIRNIQLGFFGSIFGLMGVYIYDGELVSKNGFFQGYNRLTWIVVVLQALGGLVIAAVIKYADNILKGFATSLSIILSTLISYFWLQDFVPTSVFFLGAILVITATFLYGYDPKPAGNPTKA.

The next 8 helical transmembrane spans lie at 8-24 (VSLGILVFQTTSLVLTM), 42-58 (AVVVAELLKIMACILLV), 138-154 (VYQWLSLVILMTGVAFV), 173-189 (FVGLMAVLTACFSSGFA), 209-225 (IQLGFFGSIFGLMGVYI), 246-262 (IVVVLQALGGLVIAAVI), 268-284 (ILKGFATSLSIILSTLI), and 295-311 (TSVFFLGAILVITATFL).

It belongs to the nucleotide-sugar transporter family. SLC35A subfamily. Interacts with SLC35A2; the interaction is reduced in the presence of SLC35A4. Found in a complex with SLC35A2 and SLC35A4. Interacts with MGAT4B. In terms of processing, O-Glcnacylation regulates the stability of SLC35A3 and the specific complex formation with MGAT4B.

The protein localises to the golgi apparatus membrane. The enzyme catalyses UMP(out) + UDP-N-acetyl-alpha-D-glucosamine(in) = UMP(in) + UDP-N-acetyl-alpha-D-glucosamine(out). Its function is as follows. Transports diphosphate-N-acetylglucosamine (UDP-GlcNAc) from the cytosol into the lumen of the Golgi apparatus, functioning as an antiporter that exchanges UDP-N-acetyl-alpha-D-glucosamine for UMP. May supply UDP-GlcNAc as substrate for Golgi-resident glycosyltransferases that generate highly branched, multiantennary complex N-glycans and keratan sulfate. However, the exact role of SLC35A3 still needs to be elucidated, it could be a member of a catalytically more efficient multiprotein complex rather than function independently as a single transporter. This Homo sapiens (Human) protein is UDP-N-acetylglucosamine transporter (SLC35A3).